Here is a 135-residue protein sequence, read N- to C-terminus: Fatty acid-binding protein 5 (135 aa).

Ala2 carries the N-acetylalanine modification. Residue Lys17 is modified to N6-acetyllysine. Residue Tyr22 is modified to Phosphotyrosine; by Tyr-kinases. A Nuclear localization signal motif is present at residues 24-34 (KEVGVGMALRK). Residues Cys43 and Arg109 each coordinate N-eicosanoyl ethanolamine. Cysteines 120 and 127 form a disulfide. A (9Z,12Z)-octadecadienoate-binding site is contributed by 129–131 (RVY). Tyr131 contributes to the N-eicosanoyl ethanolamine binding site. Tyr131 contacts hexadecanoate. Tyr131 carries the phosphotyrosine modification.

The protein belongs to the calycin superfamily. Fatty-acid binding protein (FABP) family. In terms of assembly, monomer. In terms of tissue distribution, most abundant in lens and retina (found in the mueller cells), moderately abundant in heart and testis (found in the Sertoli cells), and present in very low amounts in lung.

Its subcellular location is the cytoplasm. The protein localises to the nucleus. It is found in the synapse. The protein resides in the postsynaptic density. It localises to the secreted. It catalyses the reaction hexadecanoate(out) = hexadecanoate(in). The catalysed reaction is (9Z,12Z)-octadecadienoate(out) = (9Z,12Z)-octadecadienoate(in). It carries out the reaction (9Z)-octadecenoate(out) = (9Z)-octadecenoate(in). Its function is as follows. Intracellular carrier for long-chain fatty acids and related active lipids, such as endocannabinoids, that regulate the metabolism and actions of the ligands they bind. In addition to the cytosolic transport, selectively delivers specific fatty acids from the cytosol to the nucleus, wherein they activate nuclear receptors. Delivers retinoic acid to the nuclear receptor peroxisome proliferator-activated receptor delta; which promotes proliferation and survival. May also serve as a synaptic carrier of endocannabinoid at central synapses and thus controls retrograde endocannabinoid signaling. Modulates inflammation by regulating PTGES induction via NF-kappa-B activation, and prostaglandin E2 (PGE2) biosynthesis during inflammation. The polypeptide is Fatty acid-binding protein 5 (FABP5) (Bos taurus (Bovine)).